A 366-amino-acid polypeptide reads, in one-letter code: Phospho-N-acetylmuramoyl-pentapeptide-transferase (366 aa).

Transmembrane regions (helical) follow at residues 3-23, 54-74, 80-100, 120-140, 161-181, 197-217, 238-258, 262-282, 288-308, and 341-361; these read QIFI…PVLI, GIAV…VGLV, PGVS…LGFA, LVGQ…FPNA, IAIG…YLVI, LASG…FWQF, LSML…WNAA, IFMG…LSVT, LMIL…IQVV, and FWLL…AEWL.

It belongs to the glycosyltransferase 4 family. MraY subfamily. Mg(2+) is required as a cofactor.

The protein resides in the cell membrane. The catalysed reaction is UDP-N-acetyl-alpha-D-muramoyl-L-alanyl-gamma-D-glutamyl-meso-2,6-diaminopimeloyl-D-alanyl-D-alanine + di-trans,octa-cis-undecaprenyl phosphate = di-trans,octa-cis-undecaprenyl diphospho-N-acetyl-alpha-D-muramoyl-L-alanyl-D-glutamyl-meso-2,6-diaminopimeloyl-D-alanyl-D-alanine + UMP. Its pathway is cell wall biogenesis; peptidoglycan biosynthesis. In terms of biological role, catalyzes the initial step of the lipid cycle reactions in the biosynthesis of the cell wall peptidoglycan: transfers peptidoglycan precursor phospho-MurNAc-pentapeptide from UDP-MurNAc-pentapeptide onto the lipid carrier undecaprenyl phosphate, yielding undecaprenyl-pyrophosphoryl-MurNAc-pentapeptide, known as lipid I. The sequence is that of Phospho-N-acetylmuramoyl-pentapeptide-transferase from Corynebacterium jeikeium (strain K411).